The following is a 508-amino-acid chain: MKSLTLIPGQLSLSQLRDIYSHPVNITLDSGAFAAIDESVACVNAILAEGRTAYGINTGFGLLAQTRISTEDLENLQRSLVLSHAAGVGEPLDDDLARLIMVLKINSLSRGFSGIRLSVIQALIGLVNAGVTPWIPAKGSVGASGDLAPLAHMSLTLLGEGKARVRGGDWLPATEALRQVGLEPITLAAKEGLALLNGTQASTAFALRGLFEAEDLFASAVVCGALTTEAALGSRRPFDARIHEVRGQRGQIDAAALYRHLLTDDSAISQSHHNCSKVQDPYSLRCQPQVMGACLTQIRQAAEVLLAEANAVSDNPLVFAAENDVISGGNFHAEPVAMAADNIALAIAEIGSLSERRIALMMDSHMSQLPPFLVKNGGVNSGFMIAQVTAAALASENKALSHPHSVDSLPTSANQEDHVSMAPAAGRRLWAMAENTRGVLAVEWLAAAQGLDMREGLTTSPLLEEARHLLRERVPHYTQDRYFAPDIDNAIALLAARHLTRLLPAVLH.

The segment at residues 143 to 145 is a cross-link (5-imidazolinone (Ala-Gly)); sequence ASG. Serine 144 bears the 2,3-didehydroalanine (Ser) mark.

This sequence belongs to the PAL/histidase family. Post-translationally, contains an active site 4-methylidene-imidazol-5-one (MIO), which is formed autocatalytically by cyclization and dehydration of residues Ala-Ser-Gly.

It localises to the cytoplasm. It catalyses the reaction L-histidine = trans-urocanate + NH4(+). Its pathway is amino-acid degradation; L-histidine degradation into L-glutamate; N-formimidoyl-L-glutamate from L-histidine: step 1/3. This is Histidine ammonia-lyase from Klebsiella pneumoniae subsp. pneumoniae (strain ATCC 700721 / MGH 78578).